A 382-amino-acid chain; its full sequence is Draxin-A (382 aa).

A signal peptide spans methionine 1–serine 22. Disordered regions lie at residues threonine 28 to proline 213, leucine 233 to glutamine 252, and valine 275 to valine 297. The span at arginine 73–glycine 82 shows a compositional bias: low complexity. A compositionally biased stretch (basic residues) spans glycine 139–glycine 149. Residues serine 190–serine 201 are compositionally biased toward low complexity. A compositionally biased stretch (basic residues) spans serine 281–lysine 290. Residues asparagine 291 and asparagine 296 are each glycosylated (N-linked (GlcNAc...) asparagine).

Belongs to the draxin family.

It is found in the secreted. Chemorepulsive axon guidance protein required for the development of spinal cord and forebrain commissures. Acts as a chemorepulsive guidance protein for commissural axons during development. Able to inhibit or repel neurite outgrowth from dorsal spinal cord. This chain is Draxin-A (draxin-A), found in Salmo salar (Atlantic salmon).